A 123-amino-acid polypeptide reads, in one-letter code: rRNA-processing protein cgr-1 (123 aa).

Over residues methionine 1–glutamine 13 the composition is skewed to low complexity. 2 disordered regions span residues methionine 1 to serine 47 and glutamate 85 to serine 123. A coiled-coil region spans residues glutamate 49 to arginine 110. Residues glutamate 85–lysine 102 are compositionally biased toward basic and acidic residues. Residues methionine 103–serine 123 are compositionally biased toward basic residues.

The protein belongs to the CGR1 family.

It localises to the nucleus. The protein localises to the nucleolus. Functionally, involved in nucleolar integrity and required for processing of the pre-rRNA for the 60S ribosome subunit. In Neurospora crassa (strain ATCC 24698 / 74-OR23-1A / CBS 708.71 / DSM 1257 / FGSC 987), this protein is rRNA-processing protein cgr-1 (cgr-1).